The chain runs to 202 residues: MFTGIITDIGKVDRVKPLNEGVLLRIETAYDPETIELGASIACSGVCLTVVALPEKGSNARWFEVEAWEEALRLTTISSWQSGRKINLERSLKLGDEMGGHLVFGHVDGQAEIVERKDEGDAVRFTLRAPEELAPFIAQKGSVALDGTSLTVNGVNANEFDVLLIRHSLEVTTWGERKAGDKVNIEIDQLARYAARLAQYQK.

Lumazine-binding repeat units follow at residues 1–101 (MFTG…MGGH) and 102–198 (LVFG…ARLA). 2,4-dihydroxypteridine-binding positions include 4–6 (GII), 47–49 (CLT), 66–68 (EAW), 105–107 (GHV), Lys140, 149–151 (SLT), and 163–168 (LLIRHS).

As to quaternary structure, homotrimer.

The enzyme catalyses 2 6,7-dimethyl-8-(1-D-ribityl)lumazine + H(+) = 5-amino-6-(D-ribitylamino)uracil + riboflavin. The protein operates within cofactor biosynthesis; riboflavin biosynthesis; riboflavin from 2-hydroxy-3-oxobutyl phosphate and 5-amino-6-(D-ribitylamino)uracil: step 2/2. Its activity is regulated as follows. Is inhibited by riboflavin. Product inhibition may be the major mechanism by which RS regulates its enzymatic activity in vivo. Catalyzes the dismutation of two molecules of 6,7-dimethyl-8-ribityllumazine, resulting in the formation of riboflavin and 5-amino-6-(D-ribitylamino)uracil. The protein is Riboflavin synthase of Brucella abortus (strain 2308).